The primary structure comprises 330 residues: G-protein coupled bile acid receptor 1 (330 aa).

The Extracellular segment spans residues 1-19; that stretch reads MTPNSTGEVPSPIPKGALG. An N-linked (GlcNAc...) asparagine glycan is attached at asparagine 4. A helical membrane pass occupies residues 20–40; the sequence is LSLALASLIITANLLLALGIA. The Cytoplasmic segment spans residues 41-50; sequence WDRRLRSPPA. Residues 51 to 71 form a helical membrane-spanning segment; the sequence is GCFFLSLLLAGLLTGLALPTL. Over 72 to 85 the chain is Extracellular; the sequence is PGLWNQSRRGYWSC. A glycan (N-linked (GlcNAc...) asparagine) is linked at asparagine 76. Cysteine 85 and cysteine 155 are joined by a disulfide. Residues 86 to 106 traverse the membrane as a helical segment; it reads LLVYLAPNFSFLSLLANLLLV. Over 107–125 the chain is Cytoplasmic; it reads HGERYMAVLRPLQPPGSIR. A helical membrane pass occupies residues 126–146; it reads LALLLTWAGPLLFASLPALGW. Over 147 to 165 the chain is Extracellular; sequence NHWTPGANCSSQAIFPAPY. The helical transmembrane segment at 166 to 186 threads the bilayer; the sequence is LYLEVYGLLLPAVGAAAFLSV. Residues 187–228 are Cytoplasmic-facing; sequence RVLATAHRQLQDICRLERAVCRDEPSALARALTWRQARAQAG. A helical membrane pass occupies residues 229-249; sequence AMLLFGLCWGPYVATLLLSVL. The Extracellular portion of the chain corresponds to 250-261; the sequence is AYEQRPPLGPGT. The chain crosses the membrane as a helical span at residues 262–282; it reads LLSLLSLGSASAAAVPVAMGL. At 283 to 330 the chain is on the cytoplasmic side; it reads GDQRYTAPWRAAAQRCLQGLWGRASRDSPGPSIAYHPSSQSSVDLDLN. A disordered region spans residues 309-330; that stretch reads DSPGPSIAYHPSSQSSVDLDLN. A compositionally biased stretch (polar residues) spans 319 to 330; that stretch reads PSSQSSVDLDLN.

It belongs to the G-protein coupled receptor 1 family. In terms of tissue distribution, ubiquitously expressed. Expressed at higher level in spleen and placenta. Expressed at lower level in other tissues. In digestive tissues, it is expressed in stomach, duodenum, ileocecum, ileum, jejunum, ascending colon, transverse colon, descending colon, cecum and liver, but not in esophagus and rectum.

It is found in the cell membrane. Functionally, receptor for bile acid. Bile acid-binding induces its internalization, activation of extracellular signal-regulated kinase and intracellular cAMP production. May be involved in the suppression of macrophage functions by bile acids. In Homo sapiens (Human), this protein is G-protein coupled bile acid receptor 1 (GPBAR1).